A 308-amino-acid chain; its full sequence is Homoserine kinase (308 aa).

85-95 (PLTRGLGSSAA) lines the ATP pocket.

Belongs to the GHMP kinase family. Homoserine kinase subfamily.

Its subcellular location is the cytoplasm. The enzyme catalyses L-homoserine + ATP = O-phospho-L-homoserine + ADP + H(+). It participates in amino-acid biosynthesis; L-threonine biosynthesis; L-threonine from L-aspartate: step 4/5. Functionally, catalyzes the ATP-dependent phosphorylation of L-homoserine to L-homoserine phosphate. The protein is Homoserine kinase of Caldicellulosiruptor saccharolyticus (strain ATCC 43494 / DSM 8903 / Tp8T 6331).